The following is a 251-amino-acid chain: Early E1A protein (251 aa).

The segment at 38-46 is interaction with RB1 in competition with E2F1; sequence ISLHNLFDV. Residues 74-136 are interaction with UBE2I; that stretch reads SADSGAASGD…NYVNIAEGAS (63 aa). Residues 97–101 carry the LXCXE motif, interaction with host RB1 and TMEM173/STING motif; the sequence is LKCYE. The interval 102–122 is disordered; that stretch reads EGLPPSGSEADEAEERAEEEE. A compositionally biased stretch (acidic residues) spans 110–122; it reads EADEAEERAEEEE. A zinc finger lies at 150–170; sequence CRACDFHRGSSGNPEAMCALC. The PXDLS motif, CTBP-binding signature appears at 240 to 244; sequence PLNLS. Positions 246 to 250 match the Nuclear localization signal motif; sequence KRPKS.

Belongs to the adenoviridae E1A protein family. Interacts with host UBE2I; this interaction interferes with polySUMOylation. Interacts with host RB1; this interaction induces the aberrant dissociation of RB1-E2F1 complex thereby disrupting the activity of RB1 and activating E2F1-regulated genes. Interacts with host ATF7; the interaction enhances ATF7-mediated viral transactivation activity which requires the zinc binding domains of both proteins. Isoform early E1A 32 kDa protein and isoform early E1A 26 kDa protein interact (via N-terminus) with CUL1 and E3 ubiquitin ligase RBX1; these interactions inhibit RBX1-CUL1-dependent elongation reaction of ubiquitin chains and attenuate ubiquitination of SCF(FBXW7) target proteins. Interacts (via PXLXP motif) with host ZMYND11/BS69 (via MYND-type zinc finger); this interaction inhibits E1A mediated transactivation. Interacts with host EP300; this interaction stimulates the acetylation of RB1 by recruiting EP300 and RB1 into a multimeric-protein complex. Interacts with host CTBP1 and CTBP2; this interaction seems to potentiate viral replication. Interacts with host DCAF7. Interacts with host DYRK1A. Interacts with host KPNA4; this interaction allows E1A import into the host nucleus. Interacts with host EP400; this interaction stabilizes MYC. Interacts with host TBP protein; this interaction probably disrupts the TBP-TATA complex. Interacts (via LXCXE motif) with host TMEM173/STING; this interaction impairs the ability of TMEM173/STING to sense cytosolic DNA and promote the production of type I interferon (IFN-alpha and IFN-beta). Interacts (via C-terminus) with host ZBED1/hDREF (via C-terminus); the interaction is direct.

It localises to the host nucleus. In terms of biological role, plays a role in viral genome replication by driving entry of quiescent cells into the cell cycle. Stimulation of progression from G1 to S phase allows the virus to efficiently use the cellular DNA replicating machinery to achieve viral genome replication. E1A protein has both transforming and trans-activating activities. Induces the disassembly of the E2F1 transcription factor from RB1 by direct competition for the same binding site on RB1, with subsequent transcriptional activation of E2F1-regulated S-phase genes and of the E2 region of the adenoviral genome. Release of E2F1 leads to the ARF-mediated inhibition of MDM2 and causes TP53/p53 to accumulate because it is not targeted for degradation by MDM2-mediated ubiquitination anymore. This increase in TP53, in turn, would arrest the cell proliferation and direct its death but this effect is counteracted by the viral protein E1B-55K. Inactivation of the ability of RB1 to arrest the cell cycle is critical for cellular transformation, uncontrolled cellular growth and proliferation induced by viral infection. Interaction with RBX1 and CUL1 inhibits ubiquitination of the proteins targeted by SCF(FBXW7) ubiquitin ligase complex, and may be linked to unregulated host cell proliferation. The tumorigenesis-restraining activity of E1A may be related to the disruption of the host CtBP-CtIP complex through the CtBP binding motif. Interaction with host TMEM173/STING impairs the ability of TMEM173/STING to sense cytosolic DNA and promote the production of type I interferon (IFN-alpha and IFN-beta). Promotes the sumoylation of host ZBED1/hDREF with SUMO1. This chain is Early E1A protein, found in Human adenovirus F serotype 41 (HAdV-41).